A 423-amino-acid polypeptide reads, in one-letter code: Phosphoribosylamine--glycine ligase (423 aa).

The 206-residue stretch at 107 to 312 (KAFADRYGLP…LVPYLVACAN (206 aa)) folds into the ATP-grasp domain. Position 133–193 (133–193 (LELFEPPYVI…EEFLEGEIGS (61 aa))) interacts with ATP. 3 residues coordinate Mg(2+): Glu-270, Glu-282, and Asn-284. Residues Glu-270, Glu-282, and Asn-284 each contribute to the Mn(2+) site.

It belongs to the GARS family. It depends on Mg(2+) as a cofactor. Mn(2+) is required as a cofactor.

It carries out the reaction 5-phospho-beta-D-ribosylamine + glycine + ATP = N(1)-(5-phospho-beta-D-ribosyl)glycinamide + ADP + phosphate + H(+). It functions in the pathway purine metabolism; IMP biosynthesis via de novo pathway; N(1)-(5-phospho-D-ribosyl)glycinamide from 5-phospho-alpha-D-ribose 1-diphosphate: step 2/2. The sequence is that of Phosphoribosylamine--glycine ligase from Phenylobacterium zucineum (strain HLK1).